Reading from the N-terminus, the 79-residue chain is Tau-theraphotoxin-Hs1a (79 aa).

Intrachain disulfides connect Cys-2–Cys-16, Cys-9–Cys-23, Cys-15–Cys-31, Cys-44–Cys-58, Cys-51–Cys-63, and Cys-57–Cys-71. Domain repeat units lie at residues 2 to 31 (CAKE…IPHC) and 42 to 71 (TNCA…IPYC). The segment at 2-71 (CAKEGEVCSW…DCPLAFIPYC (70 aa)) is 2 X approximate repeats with cysteine pattern C-C-CC-C-C.

It belongs to the neurotoxin 23 family. Double-knot toxin subfamily. Interacts with TRPV1 (2 toxins (4 moieties) bind 1 channel (homotetramer)). In terms of tissue distribution, expressed by the venom gland.

It is found in the secreted. In terms of biological role, selectively activates the heat-activated TRPV1 channel. It binds to TRPV1 in an open state-dependent manner, trapping it there to produce irreversible currents. It binds to the outer edge of the external pore of TRPV1 in a counterclockwise configuration, using a limited protein-protein interface and inserting hydrophobic residues into the bilayer. It also partitions naturally into membranes, with the two lobes exhibiting opposing energetics for membrane partitioning (K1) and channel activation (K2). In addition, the toxin disrupts a cluster of hydrophobic residues behind the selectivity filter that are critical for channel activation. The polypeptide is Tau-theraphotoxin-Hs1a (Cyriopagopus schmidti (Chinese bird spider)).